Reading from the N-terminus, the 1761-residue chain is Laminin subunit beta-4 (1761 aa).

An N-terminal signal peptide occupies residues 1 to 19 (MQFQLTLFLHLGWLSYSKA). Residues 24-264 (NRGACHPTTG…ALYEMIVRGS (241 aa)) form the Laminin N-terminal domain. Asn169, Asn229, and Asn246 each carry an N-linked (GlcNAc...) asparagine glycan. 19 disulfide bridges follow: Cys265–Cys274, Cys267–Cys295, Cys297–Cys306, Cys309–Cys329, Cys332–Cys341, Cys334–Cys359, Cys362–Cys371, Cys374–Cys392, Cys395–Cys408, Cys397–Cys423, Cys425–Cys434, Cys437–Cys452, Cys455–Cys468, Cys457–Cys475, Cys477–Cys486, Cys489–Cys503, Cys506–Cys518, Cys508–Cys525, and Cys527–Cys536. Laminin EGF-like domains are found at residues 265-331 (CFCN…ACRS), 332-394 (CSCN…ACIP), 395-454 (CECD…GCQP), and 455-505 (CDCN…GCSP). The region spanning 506-552 (CDCDIGGAYSNVCSPKNGQCECRPHVTGRSCSEPAPGYFFAPLNFYL) is the Laminin EGF-like 5; truncated domain. The region spanning 545 to 763 (FAPLNFYLYE…LIISMSAKLH (219 aa)) is the Laminin IV type B domain. Cystine bridges form between Cys769/Cys781, Cys771/Cys788, Cys790/Cys799, Cys802/Cys814, Cys817/Cys829, Cys819/Cys836, Cys838/Cys847, Cys850/Cys860, Cys863/Cys872, Cys865/Cys879, Cys882/Cys891, Cys894/Cys908, Cys913/Cys938, Cys940/Cys949, Cys952/Cys967, Cys970/Cys984, Cys972/Cys991, Cys994/Cys1003, Cys1006/Cys1019, Cys1022/Cys1043, Cys1024/Cys1050, Cys1052/Cys1061, Cys1064/Cys1077, Cys1080/Cys1092, Cys1082/Cys1099, Cys1101/Cys1110, Cys1113/Cys1125, Cys1128/Cys1140, Cys1130/Cys1147, Cys1149/Cys1158, and Cys1161/Cys1172. 8 Laminin EGF-like domains span residues 769–816 (CKCH…GCHP), 817–862 (CHCH…SCHP), 863–910 (CPCN…PCRP), 911–969 (CLCP…PCQP), 970–1021 (CACN…TCRR), 1022–1079 (CSCH…GCQS), 1080–1127 (CDCD…RCIP), and 1128–1174 (CDCN…TCLQ). N-linked (GlcNAc...) asparagine glycosylation occurs at Asn1016. N-linked (GlcNAc...) asparagine glycosylation occurs at Asn1055. The tract at residues 1175-1375 (CHLCFDQWDH…PDIQILNEKV (201 aa)) is domain II. Residues Asn1223, Asn1301, Asn1326, Asn1333, and Asn1354 are each glycosylated (N-linked (GlcNAc...) asparagine). Positions 1243–1301 (KVKDYHDSVRRQIMQLNEQLKAVYEFQDLKDTIERAKNEADLLLEDLQEEIDLQSSVLN) form a coiled coil. A domain alpha region spans residues 1376–1408 (CGDPGNVPCVPLPCGGALCTGRKGHRKCRGPGC). Positions 1409–1761 (HGSLTLSTNA…QEKKYARCYS (353 aa)) are domain I. Residues 1416–1480 (TNALQKAQEA…SDSEEENINL (65 aa)) are a coiled coil. Asn1469, Asn1517, Asn1587, Asn1596, Asn1609, and Asn1725 each carry an N-linked (GlcNAc...) asparagine glycan. Residues 1525 to 1759 (IQKHMQLCED…VEQEKKYARC (235 aa)) are a coiled coil.

In terms of assembly, laminin is a complex glycoprotein, consisting of three different polypeptide chains (alpha, beta, gamma), which are bound to each other by disulfide bonds into a cross-shaped molecule comprising one long and three short arms with globules at each end.

Its subcellular location is the secreted. It localises to the extracellular space. It is found in the extracellular matrix. The protein resides in the basement membrane. In terms of biological role, binding to cells via a high affinity receptor, laminin is thought to mediate the attachment, migration and organization of cells into tissues during embryonic development by interacting with other extracellular matrix components. The chain is Laminin subunit beta-4 (LAMB4) from Homo sapiens (Human).